The following is a 366-amino-acid chain: NADH-quinone oxidoreductase subunit D (366 aa).

The protein belongs to the complex I 49 kDa subunit family. NDH-1 is composed of 14 different subunits. Subunits NuoB, C, D, E, F, and G constitute the peripheral sector of the complex.

The protein localises to the cell membrane. It catalyses the reaction a quinone + NADH + 5 H(+)(in) = a quinol + NAD(+) + 4 H(+)(out). In terms of biological role, NDH-1 shuttles electrons from NADH, via FMN and iron-sulfur (Fe-S) centers, to quinones in the respiratory chain. The immediate electron acceptor for the enzyme in this species is believed to be a menaquinone. Couples the redox reaction to proton translocation (for every two electrons transferred, four hydrogen ions are translocated across the cytoplasmic membrane), and thus conserves the redox energy in a proton gradient. This chain is NADH-quinone oxidoreductase subunit D, found in Bacillus cereus (strain ATCC 10987 / NRS 248).